The chain runs to 864 residues: Structure-specific endonuclease subunit SLX4 (864 aa).

Disordered regions lie at residues 1–21 (MTTQ…PVIP), 49–69 (LSTS…KTQG), 91–113 (TGTG…PGNA), 161–190 (ANQT…GNDH), 289–318 (LSDD…NRPK), 346–385 (TLLS…NEPP), 413–433 (ANGH…ISNS), and 625–767 (KAPN…VTSS). A compositionally biased stretch (polar residues) spans 295–306 (SSITEDSESATS). Residues 307 to 318 (KPRRVKAKNRPK) show a composition bias toward basic residues. Residues 656–668 (QPNSISQKATTQV) show a composition bias toward polar residues. Low complexity predominate over residues 685-695 (VSSRRSTSTSK). Residues 743 to 767 (PESFNLPTTPLTIRSGKVPSTVTSS) are compositionally biased toward polar residues.

Belongs to the SLX4 family. In terms of assembly, forms a heterodimer with SLX1. Phosphorylated in response to DNA damage.

It is found in the nucleus. In terms of biological role, regulatory subunit of the SLX1-SLX4 structure-specific endonuclease that resolves DNA secondary structures generated during DNA repair and recombination. Has endonuclease activity towards branched DNA substrates, introducing single-strand cuts in duplex DNA close to junctions with ss-DNA. In Paracoccidioides lutzii (strain ATCC MYA-826 / Pb01) (Paracoccidioides brasiliensis), this protein is Structure-specific endonuclease subunit SLX4.